A 392-amino-acid chain; its full sequence is Leucine-rich repeat-containing protein 74B (392 aa).

The disordered stretch occupies residues 24-46 (RLSGVPEAEQGPEANWDSDLETE). 9 LRR repeats span residues 106-129 (NPYV…ALAG), 134-157 (SSSI…ALCA), 162-185 (NQAM…HLAE), 192-213 (DLKS…TLGP), 220-241 (GLTE…AFAR), 248-269 (FLKV…AVGE), 276-297 (VLEE…SLGL), 304-325 (TLRI…GLLK), and 334-356 (ALEL…ASSV).

The polypeptide is Leucine-rich repeat-containing protein 74B (Homo sapiens (Human)).